Here is a 264-residue protein sequence, read N- to C-terminus: Accessory gland-specific peptide 26Aa (264 aa).

An N-terminal signal peptide occupies residues 1 to 18 (MNQILLCSPILLLLFTVA). Residues 1–138 (MNQILLCSPI…LQQRLLTEQN (138 aa)) are sufficient for promoting ovulation when expressed in females. Asparagine 88, asparagine 122, asparagine 138, and asparagine 145 each carry an N-linked (GlcNAc...) asparagine glycan. The disordered stretch occupies residues 189 to 219 (LQNTRKSTKPCKKRSSKDSAPPAANQFQEAN). A compositionally biased stretch (basic residues) spans 194-203 (KSTKPCKKRS). The necessary and sufficient for homodimerization stretch occupies residues 219 to 264 (NVRNTYRNKYLTLLKELSQKINNEIAKVATDVPTETNPSQGNLPTL).

As to quaternary structure, homodimer. In terms of assembly, may form a homodimer. Post-translationally, glycosylation. Undergoes several cleavages as it is secreted and is further processed in the recipient female. The precursor molecule is proteolytically cleaved by the seminal metalloprotease Semp1 at Lys-48 to produce CP1-N and CP1-C. In terms of processing, cleaved at Lys-67 by Semp1 to generate CP2-N and CP2-C. Cleavage appears to take place in the mated female genital tract. Post-translationally, cleaved at Lys-117 by Semp1 to generate CP3-N and CP3-C. Cleavage appears to take place in the mated female genital tract. As to expression, produced in the male accessory glands and secreted into seminal fluid (at protein level). Detected in the main cells and secondary cells of the accessory glands of 1 day old males (at protein level). In 5 day old males, confined to the secondary cells and only reappears in the main cells after mating (at protein level). Produced in adult males 3-4 hr after eclosion, levels increase reaching a peak at day 3-5 which is maintained until at least day 10 of adulthood (at protein level). In unmated male adults, levels are maintained for the first 6 days of adulthood and then gradually decrease for at least the next 8 days. In mated females, detected in the genital tract 3 minutes after the start of mating (ASM) and is secreted into the female hemolymph via the posterior vaginal wall 5 minutes ASM (at protein level).

It localises to the secreted. It is found in the cytoplasm. Its function is as follows. Male seminal protein which enhances ovulation in female Drosophila by stimulating the release of oocytes by the ovary following mating. Acts by increasing octopamine (OA) neuronal signaling in the female genital tract leading to the postmating relaxation of the oviduct muscles. This activation of the OA signaling pathway is likely to indirectly contribute to the mating-dependent increase in the number of OA synaptic sites in the female reproductive tract. Male seminal peptide which is able to enhance ovulation in female Drosophila. This is Accessory gland-specific peptide 26Aa from Drosophila melanogaster (Fruit fly).